The following is a 340-amino-acid chain: HTH-type transcriptional regulator PtxS (340 aa).

The 56-residue stretch at 12-67 (VTINQVAEAAGVSKASVSRYIGGDRQLLADATARRIERAIDQLDYRPNQMARGLKR) folds into the HTH lacI-type domain. Positions 14–33 (INQVAEAAGVSKASVSRYIG) form a DNA-binding region, H-T-H motif.

In terms of assembly, interacts with PtxR in the absence of 2-ketogluconate. Binding of the 2-ketogluconate effector to PtxS causes PtxS/PtxR complex dissociation.

Its activity is regulated as follows. 2-ketogluconate acts as a molecular effector and causes dissociation of the PtxS/PtxR complex. Functionally, negatively regulates glucose metabolism by binding directly to the promoter region of the kgu and gad operons. It also negatively regulates its own synthesis. In addition, in pathogenic strains, PtxS modulates PtxR activity in response to 2-ketogluconate. In the presence of PtxR, which also binds to the kgu and gad promoter regions, PtxS and PtxR form a tight complex, creating a DNA-loop that prevents RNA polymerase promoter access and expression of the glucose metabolism genes. Binding of the 2-ketogluconate effector to PtxS causes PtxS/PtxR complex dissociation and leads to the dissolution of the repression DNA-loop, facilitating the entry of the RNA polymerase and enabling the transcription of the genes. Also plays an important role in the regulation of the expression of the virulence factor exotoxin A (toxA). PtxS does not bind directly to the toxA promoter but negatively regulates the production of exotoxin A by binding to PtxR and interfering with its positive regulator activity. In the presence of 2-ketogluconate, PtxS is released and PtxR can recruit RNA polymerase. The protein is HTH-type transcriptional regulator PtxS of Pseudomonas aeruginosa (strain ATCC 15692 / DSM 22644 / CIP 104116 / JCM 14847 / LMG 12228 / 1C / PRS 101 / PAO1).